We begin with the raw amino-acid sequence, 146 residues long: 3-hydroxyacyl-[acyl-carrier-protein] dehydratase FabZ (146 aa).

Histidine 49 is a catalytic residue.

This sequence belongs to the thioester dehydratase family. FabZ subfamily.

The protein resides in the cytoplasm. The enzyme catalyses a (3R)-hydroxyacyl-[ACP] = a (2E)-enoyl-[ACP] + H2O. Functionally, involved in unsaturated fatty acids biosynthesis. Catalyzes the dehydration of short chain beta-hydroxyacyl-ACPs and long chain saturated and unsaturated beta-hydroxyacyl-ACPs. This chain is 3-hydroxyacyl-[acyl-carrier-protein] dehydratase FabZ, found in Pseudomonas aeruginosa (strain LESB58).